A 416-amino-acid chain; its full sequence is S-adenosylmethionine synthase (416 aa).

Residue His14 coordinates ATP. A Mg(2+)-binding site is contributed by Asp16. Glu42 lines the K(+) pocket. Glu55 and Gln98 together coordinate L-methionine. Positions 98–108 (QSADINQGVDR) are flexible loop. ATP-binding positions include 164–166 (DAK), 240–241 (KF), Asp249, 255–256 (RK), Ala272, and Lys276. Asp249 serves as a coordination point for L-methionine. Position 280 (Lys280) interacts with L-methionine.

This sequence belongs to the AdoMet synthase family. In terms of assembly, homotetramer; dimer of dimers. Mg(2+) serves as cofactor. The cofactor is K(+).

Its subcellular location is the cytoplasm. The enzyme catalyses L-methionine + ATP + H2O = S-adenosyl-L-methionine + phosphate + diphosphate. The protein operates within amino-acid biosynthesis; S-adenosyl-L-methionine biosynthesis; S-adenosyl-L-methionine from L-methionine: step 1/1. Functionally, catalyzes the formation of S-adenosylmethionine (AdoMet) from methionine and ATP. The overall synthetic reaction is composed of two sequential steps, AdoMet formation and the subsequent tripolyphosphate hydrolysis which occurs prior to release of AdoMet from the enzyme. This is S-adenosylmethionine synthase from Flavobacterium psychrophilum (strain ATCC 49511 / DSM 21280 / CIP 103535 / JIP02/86).